The following is a 351-amino-acid chain: Phosphoribosylformylglycinamidine cyclo-ligase (351 aa).

This sequence belongs to the AIR synthase family.

Its subcellular location is the cytoplasm. The enzyme catalyses 2-formamido-N(1)-(5-O-phospho-beta-D-ribosyl)acetamidine + ATP = 5-amino-1-(5-phospho-beta-D-ribosyl)imidazole + ADP + phosphate + H(+). It participates in purine metabolism; IMP biosynthesis via de novo pathway; 5-amino-1-(5-phospho-D-ribosyl)imidazole from N(2)-formyl-N(1)-(5-phospho-D-ribosyl)glycinamide: step 2/2. The polypeptide is Phosphoribosylformylglycinamidine cyclo-ligase (Burkholderia multivorans (strain ATCC 17616 / 249)).